The primary structure comprises 600 residues: MRVTTSFPLGTLRDTPSEAEIISHQLLLKAGYIRRVYSGIYAYMPIMLKVIEKISKIIEIELNSIGCTKLLLPQLHPANLWKKSERWEGYTAGEGIMFNLKDRQGKEFGLAPTHEEVITSIASEIINSYKQLPQCFYQIQTKFRDEIRPRFGLMRSREFIMKDGYSFHSSEKDLASFYEKVGNAYENIFKSCGLETVGVEADSGAIGGASSKEFMVTADAGEDSILFTQSGSYAANIEKAVSIPSQPIPLKNNISGWIETPEQKTILEVCKNNNLDPSQIIKVVVFLAKFEIKSEVPILACIRGDQHINEVKLFNLINKLHSSNLLHLQKIEDIKIIEKNLVNFPLGFIGPDLDNETIKASSNWDKTWTRIIDHSASTLSKFISGANKVNFHKVFQEFSFTSKDYLIEDIRNAKKGDKIKINDNEELKEKKGIEIGHIFQLGQKYSEKLNAKFSDKDGHLKNLWMGCYGIGVTRIAQAAIEQNHDQKGICWPIQISPFEVIIIPTNLKDQIQRDLTEQIYNNFLVNKIDVLLDDREDRAGVKFKDAELIGIPFQIIIGRDSINNEVELICRTNNTKFKISAHKLLETFISESEIMYNKNS.

This sequence belongs to the class-II aminoacyl-tRNA synthetase family. ProS type 1 subfamily. As to quaternary structure, homodimer.

It localises to the cytoplasm. The catalysed reaction is tRNA(Pro) + L-proline + ATP = L-prolyl-tRNA(Pro) + AMP + diphosphate. Functionally, catalyzes the attachment of proline to tRNA(Pro) in a two-step reaction: proline is first activated by ATP to form Pro-AMP and then transferred to the acceptor end of tRNA(Pro). As ProRS can inadvertently accommodate and process non-cognate amino acids such as alanine and cysteine, to avoid such errors it has two additional distinct editing activities against alanine. One activity is designated as 'pretransfer' editing and involves the tRNA(Pro)-independent hydrolysis of activated Ala-AMP. The other activity is designated 'posttransfer' editing and involves deacylation of mischarged Ala-tRNA(Pro). The misacylated Cys-tRNA(Pro) is not edited by ProRS. This Prochlorococcus marinus (strain MIT 9312) protein is Proline--tRNA ligase.